The primary structure comprises 267 residues: PHD finger protein ALFIN-LIKE 7 (267 aa).

The disordered stretch occupies residues 162–207; the sequence is TKVSNGSSKSNKSNPKPSKQSNSNSKPAKPPQPKDEEDSGPEGTED. Over residues 165 to 188 the composition is skewed to low complexity; sequence SNGSSKSNKSNPKPSKQSNSNSKP. The segment covering 196 to 207 has biased composition (acidic residues); that stretch reads DEEDSGPEGTED. The segment at 211–263 adopts a PHD-type zinc-finger fold; sequence AYMCGACGETYANGEFWICCDVCEKWFHGKCVRITPAKAEHIKQYKCPGCSSK.

Belongs to the Alfin family. In terms of assembly, interacts with H3K4me3 and to a lesser extent with H3K4me2.

The protein resides in the nucleus. Histone-binding component that specifically recognizes H3 tails trimethylated on 'Lys-4' (H3K4me3), which mark transcription start sites of virtually all active genes. This is PHD finger protein ALFIN-LIKE 7 from Oryza sativa subsp. japonica (Rice).